A 463-amino-acid chain; its full sequence is Glycine--tRNA ligase (463 aa).

Residues Arg-98 and Glu-170 each contribute to the substrate site. ATP-binding positions include 202–204 (RNE), 212–217 (FRTREF), 287–288 (EL), and 331–334 (GIER). 217-221 (FEQFE) contacts substrate. 327–331 (EPSLG) contributes to the substrate binding site.

Belongs to the class-II aminoacyl-tRNA synthetase family. In terms of assembly, homodimer.

The protein localises to the cytoplasm. The catalysed reaction is tRNA(Gly) + glycine + ATP = glycyl-tRNA(Gly) + AMP + diphosphate. Catalyzes the attachment of glycine to tRNA(Gly). The sequence is that of Glycine--tRNA ligase from Mycoplasmoides gallisepticum (strain R(low / passage 15 / clone 2)) (Mycoplasma gallisepticum).